The following is a 181-amino-acid chain: Large ribosomal subunit protein uL5 (181 aa).

This sequence belongs to the universal ribosomal protein uL5 family. Part of the 50S ribosomal subunit; part of the 5S rRNA/L5/L18/L25 subcomplex. Contacts the 5S rRNA and the P site tRNA. Forms a bridge to the 30S subunit in the 70S ribosome.

This is one of the proteins that bind and probably mediate the attachment of the 5S RNA into the large ribosomal subunit, where it forms part of the central protuberance. In the 70S ribosome it contacts protein S13 of the 30S subunit (bridge B1b), connecting the 2 subunits; this bridge is implicated in subunit movement. Contacts the P site tRNA; the 5S rRNA and some of its associated proteins might help stabilize positioning of ribosome-bound tRNAs. The sequence is that of Large ribosomal subunit protein uL5 from Clostridium kluyveri (strain NBRC 12016).